A 197-amino-acid chain; its full sequence is ADP-ribosylation factor 1 (197 aa).

Residue Gly2 is the site of N-myristoyl glycine attachment. GTP contacts are provided by residues 24–31, 67–71, and 126–129; these read GLDAAGKT, DVGGQ, and NKQD.

Belongs to the small GTPase superfamily. Arf family.

The protein resides in the golgi apparatus. It catalyses the reaction GTP + H2O = GDP + phosphate + H(+). Functionally, GTP-binding protein involved in protein trafficking; may modulate vesicle budding and uncoating within the Golgi apparatus. This chain is ADP-ribosylation factor 1, found in Solanum tuberosum (Potato).